Consider the following 388-residue polypeptide: Flavin-dependent monooxygenase (388 aa).

Arg-54 provides a ligand contact to NADPH. Residues Asp-61, Arg-117, and Asp-311 each contribute to the FAD site.

This sequence belongs to the aromatic-ring hydroxylase family. TetX subfamily. As to quaternary structure, monomer. FAD is required as a cofactor.

It localises to the cytoplasm. The catalysed reaction is a tetracycline + NADPH + O2 + H(+) = an 11a-hydroxytetracycline + NADP(+) + H2O. The enzyme catalyses tetracycline + NADPH + O2 + H(+) = 11a-hydroxytetracycline + NADP(+) + H2O. It catalyses the reaction oxytetracycline + NADPH + O2 + H(+) = 11a-hydroxy-oxytetracycline + NADP(+) + H2O. Functionally, an FAD-requiring monooxygenase active on some tetracycline antibiotic derivatives, which leads to their inactivation. Hydroxylates carbon 11a of tetracycline and some analogs. Its function is as follows. Confers resistance to tetracycline via an oxidoreductase activity; NADPH is more active than NAD. Expression in E.coli leads to breakdown of tetracycline. Confers resistance to doxycycline, chlortetracycline, oxytetracycline and minocycline. The chain is Flavin-dependent monooxygenase from Bacteroides fragilis.